Consider the following 682-residue polypeptide: Potassium-transporting ATPase ATP-binding subunit (682 aa).

The next 4 helical transmembrane spans lie at 35–55, 62–82, 219–239, and 254–274; these read VMFV…AMAA, TGFT…ANFA, IALT…TVTL, and VLVA…LSAI. Asp307 (4-aspartylphosphate intermediate) is an active-site residue. Residues Asp344, Glu348, 377–384, and Lys395 contribute to the ATP site; that span reads FSAQTRMS. Positions 518 and 522 each coordinate Mg(2+). The next 3 helical transmembrane spans lie at 577–597, 616–636, and 656–676; these read TFSI…AFAA, AILS…PLAL, and IYGV…DMLL.

The protein belongs to the cation transport ATPase (P-type) (TC 3.A.3) family. Type IA subfamily. In terms of assembly, the system is composed of three essential subunits: KdpA, KdpB and KdpC.

The protein localises to the cell inner membrane. It carries out the reaction K(+)(out) + ATP + H2O = K(+)(in) + ADP + phosphate + H(+). Its function is as follows. Part of the high-affinity ATP-driven potassium transport (or Kdp) system, which catalyzes the hydrolysis of ATP coupled with the electrogenic transport of potassium into the cytoplasm. This subunit is responsible for energy coupling to the transport system and for the release of the potassium ions to the cytoplasm. This is Potassium-transporting ATPase ATP-binding subunit from Erwinia tasmaniensis (strain DSM 17950 / CFBP 7177 / CIP 109463 / NCPPB 4357 / Et1/99).